A 462-amino-acid polypeptide reads, in one-letter code: tRNA modification GTPase MnmE (462 aa).

Positions 23, 86, and 125 each coordinate (6S)-5-formyl-5,6,7,8-tetrahydrofolate. The TrmE-type G domain occupies 221–384; it reads GIPVAIVGEP…LKNQLLSFVN (164 aa). Residue N231 participates in K(+) binding. GTP contacts are provided by residues 231–236, 250–256, and 275–278; these read NVGKST, SEIAGTT, and DTAG. S235 serves as a coordination point for Mg(2+). Residues S250, I252, and T255 each contribute to the K(+) site. Residue T256 participates in Mg(2+) binding. Residue K462 coordinates (6S)-5-formyl-5,6,7,8-tetrahydrofolate.

The protein belongs to the TRAFAC class TrmE-Era-EngA-EngB-Septin-like GTPase superfamily. TrmE GTPase family. Homodimer. Heterotetramer of two MnmE and two MnmG subunits. Requires K(+) as cofactor.

Its subcellular location is the cytoplasm. In terms of biological role, exhibits a very high intrinsic GTPase hydrolysis rate. Involved in the addition of a carboxymethylaminomethyl (cmnm) group at the wobble position (U34) of certain tRNAs, forming tRNA-cmnm(5)s(2)U34. This chain is tRNA modification GTPase MnmE, found in Flavobacterium psychrophilum (strain ATCC 49511 / DSM 21280 / CIP 103535 / JIP02/86).